The primary structure comprises 1191 residues: Pyruvate-flavodoxin oxidoreductase (1191 aa).

2 consecutive 4Fe-4S ferredoxin-type domains span residues 687-716 (QVCS…VKAV) and 744-773 (YVLA…TGAR). Positions 696, 699, 702, 706, 753, 756, 759, 763, 825, 828, 853, and 1085 each coordinate [4Fe-4S] cluster.

It belongs to the pyruvate:ferredoxin/flavodoxin oxidoreductase family. The cofactor is [4Fe-4S] cluster.

It carries out the reaction oxidized [flavodoxin] + pyruvate + CoA + 2 H(+) = reduced [flavodoxin] + acetyl-CoA + CO2. In terms of biological role, oxidoreductase required for the transfer of electrons from pyruvate to flavodoxin, which reduces nitrogenase. In Rhodospirillum rubrum (strain ATCC 11170 / ATH 1.1.1 / DSM 467 / LMG 4362 / NCIMB 8255 / S1), this protein is Pyruvate-flavodoxin oxidoreductase (nifJ).